We begin with the raw amino-acid sequence, 348 residues long: Phenylalanine--tRNA ligase alpha subunit (348 aa).

Glu-259 is a Mg(2+) binding site.

It belongs to the class-II aminoacyl-tRNA synthetase family. Phe-tRNA synthetase alpha subunit type 1 subfamily. Tetramer of two alpha and two beta subunits. Mg(2+) is required as a cofactor.

Its subcellular location is the cytoplasm. The catalysed reaction is tRNA(Phe) + L-phenylalanine + ATP = L-phenylalanyl-tRNA(Phe) + AMP + diphosphate + H(+). The chain is Phenylalanine--tRNA ligase alpha subunit from Lacticaseibacillus paracasei (strain ATCC 334 / BCRC 17002 / CCUG 31169 / CIP 107868 / KCTC 3260 / NRRL B-441) (Lactobacillus paracasei).